The primary structure comprises 362 residues: 3-dehydroquinate synthase (362 aa).

Residues 71-76 (DGEQYK), 105-109 (GVVGD), 129-130 (TT), K142, K151, and 169-172 (CLKT) each bind NAD(+). Residues E184, H247, and H264 each coordinate Zn(2+).

The protein belongs to the sugar phosphate cyclases superfamily. Dehydroquinate synthase family. Requires Co(2+) as cofactor. Zn(2+) is required as a cofactor. NAD(+) serves as cofactor.

Its subcellular location is the cytoplasm. It catalyses the reaction 7-phospho-2-dehydro-3-deoxy-D-arabino-heptonate = 3-dehydroquinate + phosphate. It functions in the pathway metabolic intermediate biosynthesis; chorismate biosynthesis; chorismate from D-erythrose 4-phosphate and phosphoenolpyruvate: step 2/7. Catalyzes the conversion of 3-deoxy-D-arabino-heptulosonate 7-phosphate (DAHP) to dehydroquinate (DHQ). This Escherichia coli (strain 55989 / EAEC) protein is 3-dehydroquinate synthase.